The chain runs to 138 residues: Small ribosomal subunit protein uS17 (138 aa).

2 stretches are compositionally biased toward basic and acidic residues: residues 1 to 18 (MSEEERNRGAEPEERAEA) and 43 to 55 (AFDRDAGKVQKDT). The tract at residues 1-62 (MSEEERNRGA…KDTRRGRRKE (62 aa)) is disordered.

This sequence belongs to the universal ribosomal protein uS17 family. As to quaternary structure, part of the 30S ribosomal subunit.

Functionally, one of the primary rRNA binding proteins, it binds specifically to the 5'-end of 16S ribosomal RNA. The sequence is that of Small ribosomal subunit protein uS17 from Rubrobacter xylanophilus (strain DSM 9941 / JCM 11954 / NBRC 16129 / PRD-1).